The primary structure comprises 226 residues: Beta-casein (226 aa).

Positions 1-15 are cleaved as a signal peptide; it reads MKVLILACLVALALA. Residue Thr18 is modified to Phosphothreonine; in form 5-P. Phosphoserine; in form 4-P and form 5-P is present on Ser21. Residue Ser23 is modified to Phosphoserine; in form 3-P, form 4-P and form 5-P. A phosphoserine; in form 1-P, form 2-P, form 3-P, form 4-P and form 5-P mark is found at Ser24 and Ser25.

Belongs to the beta-casein family. Post-translationally, form 1-P is phosphorylated once; half of the molecules are phosphorylated on Ser-24, half on Ser-25. In terms of tissue distribution, mammary gland specific. Secreted in milk.

Its subcellular location is the secreted. In terms of biological role, important role in determination of the surface properties of the casein micelles. This is Beta-casein (CSN2) from Homo sapiens (Human).